The chain runs to 387 residues: Formate-dependent phosphoribosylglycinamide formyltransferase (387 aa).

N(1)-(5-phospho-beta-D-ribosyl)glycinamide contacts are provided by residues 21–22 and Glu-81; that span reads EL. ATP is bound by residues Arg-113, Lys-154, 159-164, 193-196, and Glu-201; these read SSGHGQ and EEFI. The ATP-grasp domain maps to 118 to 306; it reads TFAAEEVGVK…EFALHLRAVL (189 aa). Residues Glu-265 and Glu-277 each contribute to the Mg(2+) site. N(1)-(5-phospho-beta-D-ribosyl)glycinamide is bound by residues Asp-284, Lys-352, and 359–360; that span reads RR.

Belongs to the PurK/PurT family. Homodimer.

It carries out the reaction N(1)-(5-phospho-beta-D-ribosyl)glycinamide + formate + ATP = N(2)-formyl-N(1)-(5-phospho-beta-D-ribosyl)glycinamide + ADP + phosphate + H(+). Its pathway is purine metabolism; IMP biosynthesis via de novo pathway; N(2)-formyl-N(1)-(5-phospho-D-ribosyl)glycinamide from N(1)-(5-phospho-D-ribosyl)glycinamide (formate route): step 1/1. In terms of biological role, involved in the de novo purine biosynthesis. Catalyzes the transfer of formate to 5-phospho-ribosyl-glycinamide (GAR), producing 5-phospho-ribosyl-N-formylglycinamide (FGAR). Formate is provided by PurU via hydrolysis of 10-formyl-tetrahydrofolate. The chain is Formate-dependent phosphoribosylglycinamide formyltransferase from Wolinella succinogenes (strain ATCC 29543 / DSM 1740 / CCUG 13145 / JCM 31913 / LMG 7466 / NCTC 11488 / FDC 602W) (Vibrio succinogenes).